Reading from the N-terminus, the 413-residue chain is 4-hydroxy-3-methylbut-2-en-1-yl diphosphate synthase (flavodoxin) (413 aa).

Positions 298, 301, 344, and 351 each coordinate [4Fe-4S] cluster.

Belongs to the IspG family. [4Fe-4S] cluster serves as cofactor.

The enzyme catalyses (2E)-4-hydroxy-3-methylbut-2-enyl diphosphate + oxidized [flavodoxin] + H2O + 2 H(+) = 2-C-methyl-D-erythritol 2,4-cyclic diphosphate + reduced [flavodoxin]. It participates in isoprenoid biosynthesis; isopentenyl diphosphate biosynthesis via DXP pathway; isopentenyl diphosphate from 1-deoxy-D-xylulose 5-phosphate: step 5/6. Its function is as follows. Converts 2C-methyl-D-erythritol 2,4-cyclodiphosphate (ME-2,4cPP) into 1-hydroxy-2-methyl-2-(E)-butenyl 4-diphosphate. The sequence is that of 4-hydroxy-3-methylbut-2-en-1-yl diphosphate synthase (flavodoxin) from Koribacter versatilis (strain Ellin345).